The following is a 457-amino-acid chain: Protein unc-93 homolog A (457 aa).

5 consecutive transmembrane segments (helical) span residues 8-28 (VLVLSFGFLLLFTAYGGLQSL), 42-62 (ALSTLYGGMLLSSMFLPPVLI), 65-85 (LGCKWTLVLAMCCYVAFSLGN), 86-106 (FYASWYTLIPASVLVGLGAAA), and 140-160 (IFFLIFQSSGVWGNLISSLVF). Asparagine 190 is a glycosylation site (N-linked (GlcNAc...) asparagine). 6 helical membrane passes run 202–222 (TLLGIYTGCGFLAVLLMAVFL), 257–277 (LRLLILLPMLSGFEQAFLSGD), 291–311 (FVGYVMICFGAADALCSVLFG), 320–340 (TVLFALGAVTQLACIIALLLW), 344–364 (PSQLPVFFVFPSLWGMADAVW), and 395–415 (FVIAFGYSTFLCVSVKLYVLL). The tract at residues 438 to 457 (GPLAAGRTKPAEDGATQTKL) is disordered.

It belongs to the unc-93 family.

The protein resides in the cell membrane. This chain is Protein unc-93 homolog A (UNC93A), found in Bos taurus (Bovine).